Here is a 430-residue protein sequence, read N- to C-terminus: Agropine synthesis reductase (430 aa).

203–227 (LISGPSRGIGKAIAENLIAHGYRMS) contributes to the NAD(+) binding site. Ser-333 is a substrate binding site. Tyr-346 functions as the Proton acceptor in the catalytic mechanism.

It belongs to the short-chain dehydrogenases/reductases (SDR) family.

Its pathway is opine metabolism; mannopine biosynthesis. Reduces deoxy-fructosyl-glutamine to mannopine. The protein is Agropine synthesis reductase (mas1) of Rhizobium rhizogenes (Agrobacterium rhizogenes).